A 297-amino-acid chain; its full sequence is Pyridoxal 5'-phosphate synthase subunit PdxS (297 aa).

Residue aspartate 27 participates in D-ribose 5-phosphate binding. Lysine 84 serves as the catalytic Schiff-base intermediate with D-ribose 5-phosphate. A D-ribose 5-phosphate-binding site is contributed by glycine 156. D-glyceraldehyde 3-phosphate is bound at residue arginine 168. Residues glycine 217 and 238 to 239 contribute to the D-ribose 5-phosphate site; that span reads GS.

The protein belongs to the PdxS/SNZ family. In the presence of PdxT, forms a dodecamer of heterodimers.

It carries out the reaction aldehydo-D-ribose 5-phosphate + D-glyceraldehyde 3-phosphate + L-glutamine = pyridoxal 5'-phosphate + L-glutamate + phosphate + 3 H2O + H(+). It participates in cofactor biosynthesis; pyridoxal 5'-phosphate biosynthesis. In terms of biological role, catalyzes the formation of pyridoxal 5'-phosphate from ribose 5-phosphate (RBP), glyceraldehyde 3-phosphate (G3P) and ammonia. The ammonia is provided by the PdxT subunit. Can also use ribulose 5-phosphate and dihydroxyacetone phosphate as substrates, resulting from enzyme-catalyzed isomerization of RBP and G3P, respectively. This Corynebacterium diphtheriae (strain ATCC 700971 / NCTC 13129 / Biotype gravis) protein is Pyridoxal 5'-phosphate synthase subunit PdxS.